Here is a 91-residue protein sequence, read N- to C-terminus: MSRVCELTGKGPMSGNNVSHANNKTRRRFLPNLNEVSLLSEKLGRSYQLRISAAALRSVDHRGGLDAFLAKAKDAELSDRALKIKRELAKA.

The segment at 1 to 23 is disordered; the sequence is MSRVCELTGKGPMSGNNVSHANN.

This sequence belongs to the bacterial ribosomal protein bL28 family.

The sequence is that of Large ribosomal subunit protein bL28 from Paracoccus denitrificans (strain Pd 1222).